The sequence spans 62 residues: Keratin-associated protein 19-5 (62 aa).

Positions 5–56 are 14 X 2 AA repeats of G-[YCGS]; that stretch reads GSYYGGLGSGIRGFGNLGYGYGCGCGFGGYGYGSGYGRYGYGYPRPLYYGGY.

The protein belongs to the KRTAP type 19 family. Interacts with hair keratins. In terms of tissue distribution, expressed in skin during two hair growth cycles. Expression restricted to the cortical cells of hair follicles, appearing first in the cortical cells processing the flat nuclei located a few cells above the dermal papilla.

In the hair cortex, hair keratin intermediate filaments are embedded in an interfilamentous matrix, consisting of hair keratin-associated proteins (KRTAP), which are essential for the formation of a rigid and resistant hair shaft through their extensive disulfide bond cross-linking with abundant cysteine residues of hair keratins. The matrix proteins include the high-sulfur and high-glycine-tyrosine keratins. The polypeptide is Keratin-associated protein 19-5 (Krtap19-5) (Mus musculus (Mouse)).